We begin with the raw amino-acid sequence, 361 residues long: Nuclear pore complex protein NUP43 (361 aa).

Residues 51–73 (IQSLDPNPRGNHNTNPLIESLSS) form a disordered region. WD repeat units lie at residues 132 to 173 (FHVG…YRKV), 177 to 215 (NGLV…EAVS), and 225 to 265 (KTSA…QPIV).

Part of the nuclear pore complex (NPC). The NPC has an eight-fold symmetrical structure comprising a central transport channel and two rings, the cytoplasmic and nuclear rings, to which eight filaments are attached. The cytoplasmic filaments have loose ends, while the nuclear filaments are joined in a distal ring, forming a nuclear basket. NPCs are highly dynamic in configuration and composition, and can be devided in 3 subcomplexes, the NUP62 subcomplex, the NUP107-160 subcomplex and the NUP93 subcomplex, containing approximately 30 different nucleoporin proteins.

The protein localises to the nucleus envelope. The protein resides in the nucleus. Its subcellular location is the nuclear pore complex. The chain is Nuclear pore complex protein NUP43 from Arabidopsis thaliana (Mouse-ear cress).